Here is a 341-residue protein sequence, read N- to C-terminus: Aromatic amino acid aminotransferase (341 aa).

The residue at position 213 (K213) is an N6-(pyridoxal phosphate)lysine.

This sequence belongs to the class-II pyridoxal-phosphate-dependent aminotransferase family. Homodimer. Requires pyridoxal 5'-phosphate as cofactor.

It carries out the reaction an aromatic L-alpha-amino acid + 2-oxoglutarate = an aromatic oxo-acid + L-glutamate. Aminotransferase that catalyzes the conversion of aromatic amino acids and 2-oxoglutarate into corresponding aromatic oxo acids and L-glutamate. May catalyze the transamination reaction in phenylalanine biosynthesis. The protein is Aromatic amino acid aminotransferase of Corynebacterium glutamicum (strain ATCC 13032 / DSM 20300 / JCM 1318 / BCRC 11384 / CCUG 27702 / LMG 3730 / NBRC 12168 / NCIMB 10025 / NRRL B-2784 / 534).